Consider the following 547-residue polypeptide: G protein-coupled receptor associated sorting protein 3 (547 aa).

Basic residues-rich tracts occupy residues 1-10 and 38-48; these read MTGTKNKTRA and AKTRAKAKAKT. Residues 1–53 form a disordered region; it reads MTGTKNKTRAQAKTEKKPVTQAKAGAEREATGVVRPVAKTRAKAKAKTGSKTD.

The protein belongs to the GPRASP family. In terms of assembly, homodimer.

It localises to the cytoplasm. Its subcellular location is the nucleus. Survival and differentiation promoting protein that plays a role in the regulation of neurosynaptogenesis. Induces phosphatase PP2A activity which results in APP dephosphorylation and inhibits BACE1-mediated processing of APP. The chain is G protein-coupled receptor associated sorting protein 3 (GPRASP3) from Macaca fascicularis (Crab-eating macaque).